We begin with the raw amino-acid sequence, 361 residues long: MSKFSFTIHSNYKKARSGVITTAHGKIRTPTFMPVGTRGTVKAMLTESVVETGADILLGNTYHLMLQPSAERIAYLGGLHKFMNWDKPILTDSGGFQVMSLSKLRKITEEGVSFRSHINGNKYMLTPEYSTEIQYLLGSTITMALDECTPYPSTFEEAKTSMNLTTRWANRSRDAFVKREGYAQFGIIQGSVYKELREQSVKDLVKFDFDGYAIGGLAVGEGQELMFKVLDYVSDFLPQNKPRYLMGVGKPADIIGAVSRGIDMFDCVIPTRSGRNGQAFTKYGTVNIRNSKYAEDKAPLEYDCKCPACTNYTKAYLHHLVRIREILGPMLMTWHNLTYFQNLMSRIRAYIKLGKDFDFVN.

The Proton acceptor role is filled by Asp-92. Residues 92–96 (DSGGF), Asp-146, Gln-189, and Gly-216 contribute to the substrate site. Positions 247 to 253 (GVGKPAD) are RNA binding. Asp-266 serves as the catalytic Nucleophile. Residues 271 to 275 (TRSGR) are RNA binding; important for wobble base 34 recognition. Zn(2+) is bound by residues Cys-304, Cys-306, Cys-309, and His-335.

The protein belongs to the queuine tRNA-ribosyltransferase family. As to quaternary structure, homodimer. Within each dimer, one monomer is responsible for RNA recognition and catalysis, while the other monomer binds to the replacement base PreQ1. Zn(2+) is required as a cofactor.

The catalysed reaction is 7-aminomethyl-7-carbaguanine + guanosine(34) in tRNA = 7-aminomethyl-7-carbaguanosine(34) in tRNA + guanine. It participates in tRNA modification; tRNA-queuosine biosynthesis. In terms of biological role, catalyzes the base-exchange of a guanine (G) residue with the queuine precursor 7-aminomethyl-7-deazaguanine (PreQ1) at position 34 (anticodon wobble position) in tRNAs with GU(N) anticodons (tRNA-Asp, -Asn, -His and -Tyr). Catalysis occurs through a double-displacement mechanism. The nucleophile active site attacks the C1' of nucleotide 34 to detach the guanine base from the RNA, forming a covalent enzyme-RNA intermediate. The proton acceptor active site deprotonates the incoming PreQ1, allowing a nucleophilic attack on the C1' of the ribose to form the product. After dissociation, two additional enzymatic reactions on the tRNA convert PreQ1 to queuine (Q), resulting in the hypermodified nucleoside queuosine (7-(((4,5-cis-dihydroxy-2-cyclopenten-1-yl)amino)methyl)-7-deazaguanosine). The sequence is that of Queuine tRNA-ribosyltransferase from Rickettsia typhi (strain ATCC VR-144 / Wilmington).